The sequence spans 122 residues: Small ribosomal subunit protein uS13 (122 aa).

The segment at 98–122 (VRGQRTHTNARTRKGPAKAIAGKKK) is disordered.

This sequence belongs to the universal ribosomal protein uS13 family. As to quaternary structure, part of the 30S ribosomal subunit. Forms a loose heterodimer with protein S19. Forms two bridges to the 50S subunit in the 70S ribosome.

In terms of biological role, located at the top of the head of the 30S subunit, it contacts several helices of the 16S rRNA. In the 70S ribosome it contacts the 23S rRNA (bridge B1a) and protein L5 of the 50S subunit (bridge B1b), connecting the 2 subunits; these bridges are implicated in subunit movement. Contacts the tRNAs in the A and P-sites. The polypeptide is Small ribosomal subunit protein uS13 (Ruegeria sp. (strain TM1040) (Silicibacter sp.)).